The following is a 153-amino-acid chain: Regulatory protein RecX (153 aa).

This sequence belongs to the RecX family.

Its subcellular location is the cytoplasm. Modulates RecA activity. The protein is Regulatory protein RecX of Mannheimia succiniciproducens (strain KCTC 0769BP / MBEL55E).